Reading from the N-terminus, the 366-residue chain is D-alanine--D-alanine ligase (366 aa).

The 204-residue stretch at 144–347 folds into the ATP-grasp domain; sequence KRLLKDAGLK…YRELIENLIE (204 aa). An ATP-binding site is contributed by 174-229; that stretch reads KEELGLPMFIKPANQGSSVGVHKVENEEQFYSAIKDAFQFDHKLLVEEAIVGREIE. The Mg(2+) site is built by Asp-301, Glu-314, and Asn-316.

It belongs to the D-alanine--D-alanine ligase family. Mg(2+) is required as a cofactor. It depends on Mn(2+) as a cofactor.

It is found in the cytoplasm. It catalyses the reaction 2 D-alanine + ATP = D-alanyl-D-alanine + ADP + phosphate + H(+). Its pathway is cell wall biogenesis; peptidoglycan biosynthesis. Its function is as follows. Cell wall formation. This Oceanobacillus iheyensis (strain DSM 14371 / CIP 107618 / JCM 11309 / KCTC 3954 / HTE831) protein is D-alanine--D-alanine ligase.